We begin with the raw amino-acid sequence, 131 residues long: Translation initiation factor 5A (131 aa).

A Hypusine modification is found at Lys36.

It belongs to the eIF-5A family.

The protein resides in the cytoplasm. In terms of biological role, functions by promoting the formation of the first peptide bond. This Sulfurisphaera tokodaii (strain DSM 16993 / JCM 10545 / NBRC 100140 / 7) (Sulfolobus tokodaii) protein is Translation initiation factor 5A.